The sequence spans 46 residues: Lantibiotic streptin (46 aa).

Positions 1 to 24 (MNNTIKDFDLDLKTNKKDTATPYV) are excised as a propeptide.

This sequence belongs to the type A lantibiotic family. Post-translationally, maturation of lantibiotics involves the enzymatic conversion of Thr, and Ser into dehydrated AA and the formation of thioether bonds with cysteine. This is followed by membrane translocation and cleavage of the modified precursor.

In terms of biological role, lanthionine-containing peptide antibiotic (lantibiotic) active on certain Gram-positive bacteria. The bactericidal activity of lantibiotics is based on depolarization of energized bacterial cytoplasmic membranes, initiated by the formation of aqueous transmembrane pores. The polypeptide is Lantibiotic streptin (srtA) (Streptococcus pyogenes serotype M1).